The chain runs to 200 residues: DNA dC-&gt;dU-editing enzyme APOBEC-3H (200 aa).

In terms of domain architecture, CMP/dCMP-type deaminase spans 4–126; it reads LTAETFRLQF…KPQQKGLRLL (123 aa). Residue His54 coordinates Zn(2+). Glu56 functions as the Proton donor in the catalytic mechanism. 2 residues coordinate Zn(2+): Cys85 and Cys88. Residues 160-182 are a coiled coil; it reads YKMLEELDKNSRAIKRRLERIKI.

This sequence belongs to the cytidine and deoxycytidylate deaminase family. Homodimer. Interacts with AGO1, AGO2 and AGO3. The cofactor is Zn(2+). (Microbial infection) Following infection by some HIV-1 strains, such as isolate BRU/LAI, can be ubiquitinated by a cullin-5-RING E3 ubiquitin-protein ligase complex (ECS complex) hijacked by the HIV-1 Vif protein, leading to its degradation. Ubiquitination by the ECS complex is however less efficent compared to APOBEC3G or APOBEC3G. As to expression, expressed in lymphoid organs. Also detected in non-lymphoid tissues including lung, testis, ovary, fetal liver and skin.

It localises to the cytoplasm. The protein resides in the nucleus. Its subcellular location is the P-body. It carries out the reaction a 2'-deoxycytidine in single-stranded DNA + H2O + H(+) = a 2'-deoxyuridine in single-stranded DNA + NH4(+). With respect to regulation, APOBEC3H activity is regulated by RNA. While RNA-binding inhibits the DNA deaminase activity, double-stranded RNA is required for HIV-1 restriction by promoting APOBEC3H homodimerization and packaging into retroviral nucleocapsids. (Microbial infection) Antiviral activity is inhibited to some extent by the HIV-1 virion infectivity factor (VIF), that prevents its incorporation into progeny virions by both inhibiting its translation and/or by inducing its ubiquitination and subsequent degradation by the 26S proteasome. Functionally, DNA deaminase (cytidine deaminase) which acts as an inhibitor of retrovirus replication and retrotransposon mobility via deaminase-dependent and -independent mechanisms. The A3H-var/haplotype 2 exhibits antiviral activity against vif-deficient HIV-1. After the penetration of retroviral nucleocapsids into target cells of infection and the initiation of reverse transcription, it can induce the conversion of cytosine to uracil in the minus-sense single-strand viral DNA, leading to G-to-A hypermutations in the subsequent plus-strand viral DNA. The resultant detrimental levels of mutations in the proviral genome, along with a deamination-independent mechanism that works prior to the proviral integration, together exert efficient antiretroviral effects in infected target cells. Selectively targets single-stranded DNA and does not deaminate double-stranded DNA or single- or double-stranded RNA. Exhibits antiviral activity also against T-cell leukemia virus type 1 (HTLV-1) and may inhibit the mobility of LTR and non-LTR retrotransposons. This Homo sapiens (Human) protein is DNA dC-&gt;dU-editing enzyme APOBEC-3H.